A 553-amino-acid polypeptide reads, in one-letter code: Arginine--tRNA ligase (553 aa).

Residues 130–140 (ANPTGDLHIGH) carry the 'HIGH' region motif.

The protein belongs to the class-I aminoacyl-tRNA synthetase family. As to quaternary structure, monomer.

It localises to the cytoplasm. The catalysed reaction is tRNA(Arg) + L-arginine + ATP = L-arginyl-tRNA(Arg) + AMP + diphosphate. The sequence is that of Arginine--tRNA ligase from Staphylococcus aureus (strain bovine RF122 / ET3-1).